The primary structure comprises 185 residues: Probable chorismate pyruvate-lyase 1 (185 aa).

Positions 68, 106, and 164 each coordinate substrate.

This sequence belongs to the UbiC family.

Its subcellular location is the cytoplasm. It catalyses the reaction chorismate = 4-hydroxybenzoate + pyruvate. Its pathway is cofactor biosynthesis; ubiquinone biosynthesis. Its function is as follows. Removes the pyruvyl group from chorismate, with concomitant aromatization of the ring, to provide 4-hydroxybenzoate (4HB) for the ubiquinone pathway. This Pseudomonas entomophila (strain L48) protein is Probable chorismate pyruvate-lyase 1.